The sequence spans 579 residues: Potassium-transporting ATPase potassium-binding subunit (579 aa).

10 helical membrane passes run 2 to 22, 66 to 86, 135 to 155, 177 to 197, 262 to 282, 292 to 312, 391 to 411, 437 to 457, 490 to 510, and 546 to 566; these read MNLV…AIPL, SFSV…IHIF, GLTV…FALI, VLYI…SQGV, LSNL…CFTF, GIAI…IIGV, VFGG…LAVF, VLVC…ASIL, FAGF…SMLF, and FIGL…FPAL.

This sequence belongs to the KdpA family. In terms of assembly, the system is composed of three essential subunits: KdpA, KdpB and KdpC.

Its subcellular location is the cell membrane. Part of the high-affinity ATP-driven potassium transport (or Kdp) system, which catalyzes the hydrolysis of ATP coupled with the electrogenic transport of potassium into the cytoplasm. This subunit binds the extracellular potassium ions and delivers the ions to the membrane domain of KdpB through an intramembrane tunnel. This is Potassium-transporting ATPase potassium-binding subunit from Clostridium botulinum (strain Alaska E43 / Type E3).